The sequence spans 730 residues: Ribosomal RNA large subunit methyltransferase K/L (730 aa).

Residues 46–157 (TAYRLCLWSR…RGEAILSLDL (112 aa)) form the THUMP domain. The segment covering 399–408 (AAVEEGEPRR) has biased composition (basic and acidic residues). Residues 399–418 (AAVEEGEPRRQAPVASEPAR) form a disordered region.

This sequence belongs to the methyltransferase superfamily. RlmKL family.

The protein resides in the cytoplasm. It catalyses the reaction guanosine(2445) in 23S rRNA + S-adenosyl-L-methionine = N(2)-methylguanosine(2445) in 23S rRNA + S-adenosyl-L-homocysteine + H(+). The enzyme catalyses guanosine(2069) in 23S rRNA + S-adenosyl-L-methionine = N(2)-methylguanosine(2069) in 23S rRNA + S-adenosyl-L-homocysteine + H(+). Specifically methylates the guanine in position 2445 (m2G2445) and the guanine in position 2069 (m7G2069) of 23S rRNA. This chain is Ribosomal RNA large subunit methyltransferase K/L, found in Pseudomonas entomophila (strain L48).